Reading from the N-terminus, the 182-residue chain is Adenine phosphoribosyltransferase (182 aa).

This sequence belongs to the purine/pyrimidine phosphoribosyltransferase family. As to quaternary structure, homodimer.

It localises to the cytoplasm. It carries out the reaction AMP + diphosphate = 5-phospho-alpha-D-ribose 1-diphosphate + adenine. It functions in the pathway purine metabolism; AMP biosynthesis via salvage pathway; AMP from adenine: step 1/1. Catalyzes a salvage reaction resulting in the formation of AMP, that is energically less costly than de novo synthesis. This chain is Adenine phosphoribosyltransferase, found in Shewanella frigidimarina (strain NCIMB 400).